The sequence spans 705 residues: Translation factor GUF1 homolog, mitochondrial (705 aa).

The transit peptide at 1–20 (MVCHRYLLGLGASTLCLRRL) directs the protein to the mitochondrion. The disordered stretch occupies residues 72-92 (PVEDNGTTNLTGTGEATSETG). Over residues 76–90 (NGTTNLTGTGEATSE) the composition is skewed to polar residues. Positions 105 to 288 (NRMRNFCIIA…AVVERIPPPK (184 aa)) constitute a tr-type G domain. Residues 114–121 (AHVDHGKS), 181–185 (DTPGH), and 235–238 (NKID) contribute to the GTP site.

The protein belongs to the TRAFAC class translation factor GTPase superfamily. Classic translation factor GTPase family. LepA subfamily.

It is found in the mitochondrion inner membrane. The enzyme catalyses GTP + H2O = GDP + phosphate + H(+). Its function is as follows. Promotes mitochondrial protein synthesis. May act as a fidelity factor of the translation reaction, by catalyzing a one-codon backward translocation of tRNAs on improperly translocated ribosomes. Binds to mitochondrial ribosomes in a GTP-dependent manner. The polypeptide is Translation factor GUF1 homolog, mitochondrial (Babesia bovis).